A 223-amino-acid chain; its full sequence is UPF0173 metal-dependent hydrolase THA_544 (223 aa).

The protein belongs to the UPF0173 family.

The chain is UPF0173 metal-dependent hydrolase THA_544 from Thermosipho africanus (strain TCF52B).